Here is a 914-residue protein sequence, read N- to C-terminus: Translation initiation factor IF-2 (914 aa).

Disordered regions lie at residues 246–271 (EDGE…KKKG) and 293–313 (SGMD…QRRM). A compositionally biased stretch (basic and acidic residues) spans 249 to 266 (EAAKKKAAKPDGGEDVGV). In terms of domain architecture, tr-type G spans 411 to 581 (TRPPVVTIMG…LAEAEIRELK (171 aa)). The interval 420–427 (GHVDHGKT) is G1. Residue 420–427 (GHVDHGKT) participates in GTP binding. A G2 region spans residues 445 to 449 (GITQH). Residues 467-470 (DTPG) are G3. Residues 467–471 (DTPGH) and 521–524 (NKID) contribute to the GTP site. The G4 stretch occupies residues 521-524 (NKID). Positions 557 to 559 (SAK) are G5.

This sequence belongs to the TRAFAC class translation factor GTPase superfamily. Classic translation factor GTPase family. IF-2 subfamily.

Its subcellular location is the cytoplasm. Its function is as follows. One of the essential components for the initiation of protein synthesis. Protects formylmethionyl-tRNA from spontaneous hydrolysis and promotes its binding to the 30S ribosomal subunits. Also involved in the hydrolysis of GTP during the formation of the 70S ribosomal complex. In Chlorobaculum tepidum (strain ATCC 49652 / DSM 12025 / NBRC 103806 / TLS) (Chlorobium tepidum), this protein is Translation initiation factor IF-2.